The primary structure comprises 327 residues: Tagatose 1,6-diphosphate aldolase 2 (327 aa).

It belongs to the aldolase LacD family.

It catalyses the reaction D-tagatofuranose 1,6-bisphosphate = D-glyceraldehyde 3-phosphate + dihydroxyacetone phosphate. It functions in the pathway carbohydrate metabolism; D-tagatose 6-phosphate degradation; D-glyceraldehyde 3-phosphate and glycerone phosphate from D-tagatose 6-phosphate: step 2/2. The chain is Tagatose 1,6-diphosphate aldolase 2 (lacD2) from Streptococcus pyogenes serotype M1.